A 162-amino-acid polypeptide reads, in one-letter code: Cyclic pyranopterin monophosphate synthase (162 aa).

Substrate-binding positions include Leu75–His77 and Met113–Glu114. The active site involves Asp128.

The protein belongs to the MoaC family. In terms of assembly, homohexamer; trimer of dimers.

It catalyses the reaction (8S)-3',8-cyclo-7,8-dihydroguanosine 5'-triphosphate = cyclic pyranopterin phosphate + diphosphate. It participates in cofactor biosynthesis; molybdopterin biosynthesis. Functionally, catalyzes the conversion of (8S)-3',8-cyclo-7,8-dihydroguanosine 5'-triphosphate to cyclic pyranopterin monophosphate (cPMP). This Klebsiella pneumoniae subsp. pneumoniae (strain ATCC 700721 / MGH 78578) protein is Cyclic pyranopterin monophosphate synthase.